The following is a 468-amino-acid chain: Glutamate--tRNA ligase (468 aa).

The 'HIGH' region signature appears at 8-18 (PSPTGFLHVGG). The Zn(2+) site is built by Cys-97, Cys-99, Cys-124, and Asp-126. The short motif at 236-240 (KLSKR) is the 'KMSKS' region element. Residue Lys-239 coordinates ATP.

This sequence belongs to the class-I aminoacyl-tRNA synthetase family. Glutamate--tRNA ligase type 1 subfamily. As to quaternary structure, monomer. Zn(2+) serves as cofactor.

Its subcellular location is the cytoplasm. The enzyme catalyses tRNA(Glu) + L-glutamate + ATP = L-glutamyl-tRNA(Glu) + AMP + diphosphate. Catalyzes the attachment of glutamate to tRNA(Glu) in a two-step reaction: glutamate is first activated by ATP to form Glu-AMP and then transferred to the acceptor end of tRNA(Glu). This Francisella tularensis subsp. mediasiatica (strain FSC147) protein is Glutamate--tRNA ligase.